We begin with the raw amino-acid sequence, 247 residues long: tRNA pseudouridine synthase A (247 aa).

D52 (nucleophile) is an active-site residue. Y113 serves as a coordination point for substrate.

This sequence belongs to the tRNA pseudouridine synthase TruA family. In terms of assembly, homodimer.

It carries out the reaction uridine(38/39/40) in tRNA = pseudouridine(38/39/40) in tRNA. Functionally, formation of pseudouridine at positions 38, 39 and 40 in the anticodon stem and loop of transfer RNAs. In Bartonella quintana (strain Toulouse) (Rochalimaea quintana), this protein is tRNA pseudouridine synthase A.